The primary structure comprises 343 residues: Probable potassium channel protein 2 (343 aa).

Residues 1–7 (METSKKL) lie on the Cytoplasmic side of the membrane. Residues 8–28 (VIVAVLSITLILTYAYLISII) traverse the membrane as a helical segment. The Extracellular segment spans residues 29 to 61 (EGVDYFTALYFSVITITTTGYGDFTPKTFLGRT). The Selectivity filter motif lies at 46–51 (TTGYGD). A helical membrane pass occupies residues 62 to 82 (LTVVYLCVGVGIVMYLFSLIA). Residues 83-343 (EFIVEGKFEE…NLVKKKKKKL (261 aa)) are Cytoplasmic-facing. Residues 107–227 (KDHYIICGYG…KIAGANRVVS (121 aa)) form the RCK N-terminal domain. In terms of domain architecture, RCK C-terminal spans 253-338 (IKIAKDEYEE…LKYLENLVKK (86 aa)).

The protein localises to the cell membrane. Its function is as follows. Probable potassium channel protein. This chain is Probable potassium channel protein 2, found in Methanocaldococcus jannaschii (strain ATCC 43067 / DSM 2661 / JAL-1 / JCM 10045 / NBRC 100440) (Methanococcus jannaschii).